Consider the following 487-residue polypeptide: MTNEVRVRYAPSPTGYPHLGNIRTAMFNWLFARHNGGKFIVRIEDTDRERYVEGAVESILESLNWLGLDWDEGPDKGGDYGPYYQSERLPLYRKAAEKLVAEGKAYYCHCSSEKLDKMREDQIARKEPPGYDRCCRDRGLGQKEGAVIRFKIPLDGQTAFTDLIRGEVTFDNAKQDDFVILKSDGFPTYHLASVVDDHAMQISHVLRAEEWLPSTPKHLMLYKALGYTPPLYAHLPMILGPDRSKLSKRHGATSTIEYKQAGYLPETMVNFLSLLGWAYDDKTELFSREQLIEYFCLEKVSKTAAIFNYEKLDWMNGMYIRTLSAQDLACRAMPFLEKDARIAASGHLNLDYTVKVMPLIQERAKKLNELAELCWFIYSDDISYDPALLIDKKLTKETSLSALKAANARLEALPNFDAASMEEHIRPLAAELELKPGQLFGMLRTASTGQQVAPPLFQTMEVLGRQRCLGRIAMAIARLSEMPSQRS.

The short motif at 11–21 is the 'HIGH' region element; it reads PSPTGYPHLGN. Zn(2+)-binding residues include cysteine 108, cysteine 110, cysteine 135, and aspartate 137. Residues 245-249 carry the 'KMSKS' region motif; it reads KLSKR. Residue lysine 248 participates in ATP binding.

It belongs to the class-I aminoacyl-tRNA synthetase family. Glutamate--tRNA ligase type 1 subfamily. In terms of assembly, monomer. Zn(2+) serves as cofactor.

Its subcellular location is the cytoplasm. It catalyses the reaction tRNA(Glu) + L-glutamate + ATP = L-glutamyl-tRNA(Glu) + AMP + diphosphate. Functionally, catalyzes the attachment of glutamate to tRNA(Glu) in a two-step reaction: glutamate is first activated by ATP to form Glu-AMP and then transferred to the acceptor end of tRNA(Glu). This Dehalococcoides mccartyi (strain ATCC BAA-2100 / JCM 16839 / KCTC 5957 / BAV1) protein is Glutamate--tRNA ligase.